The chain runs to 2212 residues: MQDPLLGTLSELKDLVRKTIPDVIELAYQKDALLSQVHPRSVLIEGFKLLSLLVELESCKVNACHHNYEQKFIDVILSDGGILCPTLPKVVPDGYNLMGKTLILLETFVRVNPDDFEKKWKADMSKLISLKTDLGKIGVTLVPVVDGRSNYNTSFVSDWTTERLRWLLIEVLKGMKTTSELEIEEQEYHRLIHSLAKTNNQSLGFENLECLKRNMLSYDQLLDSSLLVGVKNDVKESKVMEELIRLKIWYKSEVYEKGLGKFVKTDKKVLLSQLITLGSHEENDSLDCAFCSSRILELCFKLSVKMHEDVLTRGLNLDGTKTLHSSVQSYLNVLSMCNKIKGSKIFNTRRNTLLFLDLIMLNFVVDEMVKDSTVIRNLKNAGLIVGQMILLVNDRVLDILTANKLIRQKLTTNEKWLSICSSVLKRYDLELWEKLCYLIRVPDFNELFQLAKELVSDRPMMRYSVHKAEERQCCHKAMENFTDDDFKIMLKALSHLSLGLINSMKTSFSSRLLINERDYSRYFGNVRLRECYIQRFPITNNIIGLLFYQKTGERSRCYSLYIAENGELTEIGSFYCDPKRYFVPIFSEAVITSMCEEMINWLNFDSELVRIVSTQLKTLMLLLLCSPSKRNQTFLQGLRYFIMAYVNQAHHIDLMSKLAVECKSSSEIQLQRLCVRLFVSILSGDNEIEYGFTRRFKFLLNISYLCHFITKETPDRLTDQIKCFEKFLEPKLKFNSVIVNPSLNGTLTESQEHQMISSIDRFFSKELLDQSDVKEPGVSRELLGYCVSLFNRGKLRVSGDLKVDPFRPTFTSTALDISSNKSVVVPKLDELGNIVDKYNKQLMVSSCVTSLVEMFKTKGRYNLDPDSIDFLVLKNLTNLVSANVPQEKSQEELSTLYEALTEDQISAFEQVRDEVQLALHKMKSSDAREERLQDPKRNEKNASKGKILESLWSPHQVNRAIKNETSIHEIKDFDPDILDSHLVEKLCHEVYNSSQKSLFFLDEPLKSVPLEMLLINLTTIAYEEEEFFECFKYLLIQGDFDQKLGTYEHKSRSRLGLSSEALKVQENARVSTRESNAEAIAKKLDRTFFTSAALRNLCFYSEDSPTEFTSVSTNTGNLKFGLSYKEQVGSNRELYVGDLNTKLMTRLVEDFSEVVTGSMRFSCLNSEKEFERAICDMKMAVNNGDFSLSMDHSKWGPHMSPALFFTFLANLNLTEPKSRTRLNLDPLLNILKWHLHKTVEVPFNVAQAYCIGKLKRSLGLMECQCSSLTEEFYHSYLQIQDEIPSHIMSVLDMGQGILHNLSDLYALITEQFLNYVIHKLFDIDVTSYTSSDDQISIMKLPLSTKENDEDFDWLEIICFHEYLSSKLNKFVSPKSVVGNFVAEFKSRFFVMGEETPLLTKFVAAALHNVKCKTPTQLAETIDTICDQCVANGVGVDIVSRISERVNRLISYSGYKETPFLTIVNQDVKDWTDGSRGYRLQRNIENSFGNQELLRLIRRGARKVFLEIKKGHVFEENLIGLIGRGGDEALRGFLLYAGFAENDIVEALRHKWLNPSTFGDLRLVLRTKIMSSKRILERESVPSLIKTLQSRMSKNFIKGAKKILAESINKSAFQSSVASGFIGFCKSMGSKCVRDGKGGFMYLKELYNNVNKCGCCICLEWPGVVYCQDSLAKISQFARSILWDYFTLVLTNACEIGEWVFSDVKSPSAPPILSNPNLFWAVKPKIQKHIEDRLSLNHILHSIKRNYPYLFEEHLAPFMSDLQFNQMMNPSHVKFLDVCIALDMMNENLGIIGHLLRGRNHFIYIVKQSECASAHIRQSDYVDHELGLSPQQVCYNFKVQFLFSSMIDPLIVSTSTLKTFFWFNEVLSIEEEDQIDLGELTDFTLFIKTGHLNRAMTADDITMGYVCSNLAEEIITLNSYGSFQEFRSNHPSKNDLSDILKTLTSESIKLTLDIQIVHMRNSTKYNISRKIVYTLKALCALPLEDCFTKDPVALVESLELFASGVNGGHLQLDGVTMVSVLPLLRGKKAVNLAQILMDNDLAATNDHNVMESVTLDFTKFHDELGDKFCYSLVGPEDQGNPIVLHNGMFMIDNQKLSYLKVEIFGDTIIKALGALDSPREIGSLLHGLWPYLKATKQIINFDQTDFEMIYDLHRVVLLESIAQFGDWVEFASFKVAFSKHYKDIVVADNLGNLRLKGVTCRLFRQQQSVEDIE.

Residues 30-288 (KDALLSQVHP…SHEENDSLDC (259 aa)) are endonuclease. Positions 55, 93, and 106 each coordinate Mn(2+). Residue Lys-119 is part of the active site. The interval 922-942 (MKSSDAREERLQDPKRNEKNA) is disordered. Residues 923–942 (KSSDAREERLQDPKRNEKNA) show a composition bias toward basic and acidic residues. Residues 1175–1371 (CDMKMAVNNG…YLSSKLNKFV (197 aa)) form the RdRp catalytic domain. Asp-1333 provides a ligand contact to Mg(2+).

Belongs to the Bunyavirales RNA polymerase family. In terms of assembly, homomultimer; the oligomeric structure is essential for the polymerase activity. Interacts with nucleoprotein N. Interacts with protein Z; this interaction inhibits viral transcription and replication, Z partially blocks the product exit tunnel for the releasing nascent RNA product. Mn(2+) is required as a cofactor. Mg(2+) serves as cofactor.

Its subcellular location is the virion. It is found in the host cytoplasm. It carries out the reaction RNA(n) + a ribonucleoside 5'-triphosphate = RNA(n+1) + diphosphate. Its function is as follows. RNA-dependent RNA polymerase, which is responsible for the replication and transcription of the viral RNA genome using antigenomic RNA as an intermediate. During transcription, synthesizes subgenomic RNAs and assures their capping by a cap-snatching mechanism, which involves the endonuclease activity cleaving the host capped pre-mRNAs. These short capped RNAs are then used as primers for viral transcription. The 3'-end of subgenomic mRNAs molecules are heterogeneous and not polyadenylated. The replicase function is to direct synthesis of antigenomic and genomic RNA which are encapsidated and non capped. As a consequence of the use of the same enzyme for both transcription and replication, these mechanisms need to be well coordinated. These processes may be regulated by proteins N and Z in a dose-dependent manner. Z protein inhibits the viral polymerase L und thus the viral transcription and RNA synthesis. The protein is RNA-directed RNA polymerase L of Sabia mammarenavirus (isolate Human/Brasil/SPH114202/1990) (SABV).